Here is a 227-residue protein sequence, read N- to C-terminus: DnaJ homolog subfamily B member 8 (227 aa).

The region spanning 3–69 (NYYEVLGVQS…KKRSVYDRAG (67 aa)) is the J domain.

Interacts with histone deacetylases HDAC4, HDAC6, and SIRT2, HDAC activity is required for antiaggregation.

In terms of biological role, efficient suppressor of aggregation and toxicity of disease-associated polyglutamine proteins. The polypeptide is DnaJ homolog subfamily B member 8 (Dnajb8) (Mus musculus (Mouse)).